The chain runs to 276 residues: Large ribosomal subunit protein uL2c (276 aa).

The disordered stretch occupies residues 225 to 276 (AMNPVDHPHGGGEGRTPIGRKKPVTPWGYSALGKKSRKRNRYSDASILRRRE).

It belongs to the universal ribosomal protein uL2 family. In terms of assembly, part of the 50S ribosomal subunit.

Its subcellular location is the plastid. It is found in the chloroplast. This Pinus thunbergii (Japanese black pine) protein is Large ribosomal subunit protein uL2c (rpl2).